We begin with the raw amino-acid sequence, 467 residues long: Multiple inositol polyphosphate phosphatase 1 (467 aa).

The signal sequence occupies residues 1–15 (MRLLILLLLPLVAIA). Residue His67 is part of the active site. N-linked (GlcNAc...) asparagine glycans are attached at residues Asn120, Asn159, and Asn234. Gly441 carries the GPI-anchor amidated glycine lipid modification. Positions 442 to 467 (GAPSLGSGVGGLLATTLAAMLVYLMH) are cleaved as a propeptide — removed in mature form.

Belongs to the histidine acid phosphatase family. MINPP1 subfamily. N-glycosylated.

Its subcellular location is the cell membrane. It is found in the apical cell membrane. The protein resides in the basolateral cell membrane. The protein localises to the cell projection. It localises to the filopodium. Its subcellular location is the cell junction. It carries out the reaction (2R)-2,3-bisphosphoglycerate + H2O = (2R)-2-phosphoglycerate + phosphate. The catalysed reaction is 1D-myo-inositol hexakisphosphate + H2O = 1D-myo-inositol 1,2,4,5,6-pentakisphosphate + phosphate. It catalyses the reaction 1D-myo-inositol 1,2,4,5,6-pentakisphosphate + H2O = 1D-myo-inositol 1,2,5,6-tetrakisphosphate + phosphate. The enzyme catalyses 1D-myo-inositol 1,2,5,6-tetrakisphosphate + H2O = 1D-myo-inositol 1,2,6-trisphosphate + phosphate. Its function is as follows. Probable multiple inositol polyphosphate phosphatase that hydrolyzes 1D-myo-inositol 1,3,4,5,6-pentakisphosphate (InsP5[2OH]) and 1D-myo-inositol hexakisphosphate (InsP6) to a range of less phosphorylated inositol phosphates. This regulates the availability of these various small molecule second messengers and metal chelators which control many aspects of cell physiology. May have a dual substrate specificity, and function as a 2,3-bisphosphoglycerate 3-phosphatase hydrolyzing 2,3-bisphosphoglycerate to 2-phosphoglycerate. 2,3-bisphosphoglycerate (BPG) is formed as part of the Rapoport-Luebering glycolytic bypass. Has a role in embryonic tracheal development where it localizes to the leading edge of actively migrating branches. In these leading cells, enhances formation and/or maintenance of filopodia which may drive branch migration and elongation by cell-cell intercalation. The function in tracheal morphogenesis is dependent on its inositol polyphosphate phosphatase activity. The chain is Multiple inositol polyphosphate phosphatase 1 from Drosophila melanogaster (Fruit fly).